The following is a 971-amino-acid chain: Translation initiation factor IF-2 (971 aa).

The interval 39–379 is disordered; the sequence is DQDANRLRTR…APRGNRRNVK (341 aa). Basic and acidic residues predominate over residues 53 to 63; sequence QGKEQAVEPRK. Over residues 65-75 the composition is skewed to polar residues; sequence VPSQESKNLTQ. The span at 310–326 shows a compositional bias: low complexity; the sequence is RPQGQRPMGDRPQGQRP. Residues 342 to 370 are compositionally biased toward basic and acidic residues; sequence PPKRQIGEKKKPQDRNFERKKEMEKEIRA. The tr-type G domain occupies 471–640; sequence SRPPVVTVMG…LLVAEIKELK (170 aa). The G1 stretch occupies residues 480–487; sequence GHVDHGKT. 480 to 487 is a binding site for GTP; sequence GHVDHGKT. Positions 505–509 are G2; that stretch reads GITQH. The interval 526 to 529 is G3; that stretch reads DTPG. Residues 526–530 and 580–583 contribute to the GTP site; these read DTPGH and NKID. Positions 580–583 are G4; that stretch reads NKID. The tract at residues 616-618 is G5; the sequence is SAK.

The protein belongs to the TRAFAC class translation factor GTPase superfamily. Classic translation factor GTPase family. IF-2 subfamily.

It is found in the cytoplasm. In terms of biological role, one of the essential components for the initiation of protein synthesis. Protects formylmethionyl-tRNA from spontaneous hydrolysis and promotes its binding to the 30S ribosomal subunits. Also involved in the hydrolysis of GTP during the formation of the 70S ribosomal complex. The protein is Translation initiation factor IF-2 of Desulfitobacterium hafniense (strain Y51).